The chain runs to 359 residues: 3-dehydroquinate synthase (359 aa).

NAD(+)-binding positions include 71–76 (DGEQYK), 104–108 (GVVGD), 128–129 (TT), Lys-141, Lys-150, and 168–171 (TLNT). The Zn(2+) site is built by Glu-183, His-247, and His-264.

Belongs to the sugar phosphate cyclases superfamily. Dehydroquinate synthase family. The cofactor is Co(2+). Zn(2+) serves as cofactor. It depends on NAD(+) as a cofactor.

The protein localises to the cytoplasm. It catalyses the reaction 7-phospho-2-dehydro-3-deoxy-D-arabino-heptonate = 3-dehydroquinate + phosphate. It functions in the pathway metabolic intermediate biosynthesis; chorismate biosynthesis; chorismate from D-erythrose 4-phosphate and phosphoenolpyruvate: step 2/7. In terms of biological role, catalyzes the conversion of 3-deoxy-D-arabino-heptulosonate 7-phosphate (DAHP) to dehydroquinate (DHQ). This Coxiella burnetii (strain Dugway 5J108-111) protein is 3-dehydroquinate synthase.